The sequence spans 762 residues: Xaa-Pro dipeptidyl-peptidase (762 aa).

Catalysis depends on charge relay system residues serine 349, aspartate 469, and histidine 499.

This sequence belongs to the peptidase S15 family. Homodimer.

Its subcellular location is the cytoplasm. The enzyme catalyses Hydrolyzes Xaa-Pro-|- bonds to release unblocked, N-terminal dipeptides from substrates including Ala-Pro-|-p-nitroanilide and (sequentially) Tyr-Pro-|-Phe-Pro-|-Gly-Pro-|-Ile.. In terms of biological role, removes N-terminal dipeptides sequentially from polypeptides having unsubstituted N-termini provided that the penultimate residue is proline. This chain is Xaa-Pro dipeptidyl-peptidase, found in Streptococcus sanguinis (strain SK36).